The primary structure comprises 252 residues: tRNA pseudouridine synthase A (252 aa).

Asp-54 serves as the catalytic Nucleophile. Residue Tyr-113 coordinates substrate.

It belongs to the tRNA pseudouridine synthase TruA family. In terms of assembly, homodimer.

The enzyme catalyses uridine(38/39/40) in tRNA = pseudouridine(38/39/40) in tRNA. Its function is as follows. Formation of pseudouridine at positions 38, 39 and 40 in the anticodon stem and loop of transfer RNAs. This Bacteroides fragilis (strain ATCC 25285 / DSM 2151 / CCUG 4856 / JCM 11019 / LMG 10263 / NCTC 9343 / Onslow / VPI 2553 / EN-2) protein is tRNA pseudouridine synthase A.